A 231-amino-acid polypeptide reads, in one-letter code: Large ribosomal subunit protein uL1 (231 aa).

It belongs to the universal ribosomal protein uL1 family. As to quaternary structure, part of the 50S ribosomal subunit.

Its function is as follows. Binds directly to 23S rRNA. The L1 stalk is quite mobile in the ribosome, and is involved in E site tRNA release. In terms of biological role, protein L1 is also a translational repressor protein, it controls the translation of the L11 operon by binding to its mRNA. The chain is Large ribosomal subunit protein uL1 from Ectopseudomonas mendocina (strain ymp) (Pseudomonas mendocina).